The sequence spans 156 residues: S-ribosylhomocysteine lyase (156 aa).

The Fe cation site is built by H56, H60, and C123.

Belongs to the LuxS family. As to quaternary structure, homodimer. Fe cation is required as a cofactor.

The enzyme catalyses S-(5-deoxy-D-ribos-5-yl)-L-homocysteine = (S)-4,5-dihydroxypentane-2,3-dione + L-homocysteine. Its function is as follows. Involved in the synthesis of autoinducer 2 (AI-2) which is secreted by bacteria and is used to communicate both the cell density and the metabolic potential of the environment. The regulation of gene expression in response to changes in cell density is called quorum sensing. Catalyzes the transformation of S-ribosylhomocysteine (RHC) to homocysteine (HC) and 4,5-dihydroxy-2,3-pentadione (DPD). This Staphylococcus epidermidis (strain ATCC 35984 / DSM 28319 / BCRC 17069 / CCUG 31568 / BM 3577 / RP62A) protein is S-ribosylhomocysteine lyase.